Here is a 336-residue protein sequence, read N- to C-terminus: N-acetyl-gamma-glutamyl-phosphate reductase (336 aa).

C143 is a catalytic residue.

It belongs to the NAGSA dehydrogenase family. Type 1 subfamily.

It is found in the cytoplasm. The catalysed reaction is N-acetyl-L-glutamate 5-semialdehyde + phosphate + NADP(+) = N-acetyl-L-glutamyl 5-phosphate + NADPH + H(+). It participates in amino-acid biosynthesis; L-arginine biosynthesis; N(2)-acetyl-L-ornithine from L-glutamate: step 3/4. Its function is as follows. Catalyzes the NADPH-dependent reduction of N-acetyl-5-glutamyl phosphate to yield N-acetyl-L-glutamate 5-semialdehyde. The sequence is that of N-acetyl-gamma-glutamyl-phosphate reductase from Dictyoglomus thermophilum (strain ATCC 35947 / DSM 3960 / H-6-12).